The sequence spans 250 residues: MGLLFNNLIMNFDAPSPWGIYFQDSATPQMEGLVELHDNIMYYLVVILFGVGWILLSIIRNYISTKSPISHKYLNHGTLIELIWTITPAVILILIAFPSFKLLYLMDEVSDPSMSVLAEGHQWYWSYQYPDFLDSNDEFIEFDSYIVPESDLEEGALRMLEVDNRVILPELTHVRFIITAGDVIHSFAVPSLGVKCDAYPGRLNQVSVFINREGVFYGQCSEICGILHSSMPIVIESVSLEKFLTWLEEQ.

At 1-27 (MGLLFNNLIMNFDAPSPWGIYFQDSAT) the chain is on the mitochondrial intermembrane side. A helical transmembrane segment spans residues 28–61 (PQMEGLVELHDNIMYYLVVILFGVGWILLSIIRN). The Mitochondrial matrix segment spans residues 62 to 77 (YISTKSPISHKYLNHG). The helical transmembrane segment at 78–107 (TLIELIWTITPAVILILIAFPSFKLLYLMD) threads the bilayer. Topologically, residues 108 to 250 (EVSDPSMSVL…EKFLTWLEEQ (143 aa)) are mitochondrial intermembrane. 6 residues coordinate Cu cation: His-185, Cys-220, Glu-222, Cys-224, His-228, and Met-231. Residue Glu-222 coordinates Mg(2+).

The protein belongs to the cytochrome c oxidase subunit 2 family. As to quaternary structure, component of the cytochrome c oxidase (complex IV, CIV), a multisubunit enzyme composed of 11 subunits. The complex is composed of a catalytic core of 3 subunits Cox1, Cox2 and Cox3, encoded in the mitochondrial DNA, and 8 supernumerary subunits Cox4, Cox5a/Cox5, Cox6, Cox7, Cox8, Cox7a/Cox9, Cox6b/Cox12 and Cox6a/Cox13, which are encoded in the nuclear genome. The complex exists as a monomer or a dimer and forms respiratory supercomplexes (SCs) in the inner mitochondrial membrane with NADH-ubiquinone oxidoreductase (complex I, CI) and ubiquinol-cytochrome c oxidoreductase (cytochrome b-c1 complex, complex III, CIII), resulting in various different assemblies (supercomplexes I(1)IV(1), I(1)III(3)IV(2), III(2)IV(1) and III(2)IV(2) as well as larger supercomplexes of compositions like I(1)III(2)IV(5-6)). Requires Cu cation as cofactor.

The protein localises to the mitochondrion inner membrane. The catalysed reaction is 4 Fe(II)-[cytochrome c] + O2 + 8 H(+)(in) = 4 Fe(III)-[cytochrome c] + 2 H2O + 4 H(+)(out). Its function is as follows. Component of the cytochrome c oxidase, the last enzyme in the mitochondrial electron transport chain which drives oxidative phosphorylation. The respiratory chain contains 3 multisubunit complexes succinate dehydrogenase (complex II, CII), ubiquinol-cytochrome c oxidoreductase (cytochrome b-c1 complex, complex III, CIII) and cytochrome c oxidase (complex IV, CIV), that cooperate to transfer electrons derived from NADH and succinate to molecular oxygen, creating an electrochemical gradient over the inner membrane that drives transmembrane transport and the ATP synthase. Cytochrome c oxidase is the component of the respiratory chain that catalyzes the reduction of oxygen to water. Electrons originating from reduced cytochrome c in the intermembrane space (IMS) are transferred via the dinuclear copper A center (CU(A)) of Cox2 and heme A of Cox1 to the active site in Cox1, a binuclear center (BNC) formed by heme A3 and copper B (CU(B)). The BNC reduces molecular oxygen to 2 water molecules using 4 electrons from cytochrome c in the IMS and 4 protons from the mitochondrial matrix. In Neurospora crassa (strain ATCC 24698 / 74-OR23-1A / CBS 708.71 / DSM 1257 / FGSC 987), this protein is Cytochrome c oxidase subunit 2 (cox-2).